The chain runs to 98 residues: Large ribosomal subunit protein uL23 (98 aa).

The protein belongs to the universal ribosomal protein uL23 family. In terms of assembly, part of the 50S ribosomal subunit. Contacts protein L29, and trigger factor when it is bound to the ribosome.

One of the early assembly proteins it binds 23S rRNA. One of the proteins that surrounds the polypeptide exit tunnel on the outside of the ribosome. Forms the main docking site for trigger factor binding to the ribosome. The polypeptide is Large ribosomal subunit protein uL23 (Rickettsia peacockii (strain Rustic)).